The chain runs to 267 residues: X-box-binding protein 1 (267 aa).

The Cytoplasmic segment spans residues 1–180 (MVVVAAAPSA…VQAQLSPPQN (180 aa)). The interval 35-56 (VPGPRAAGSEASGTPQARKRQR) is disordered. Serine 61 carries the phosphoserine modification. The 64-residue stretch at 63–126 (EEKALRRKLK…HGLVVENQEL (64 aa)) folds into the bZIP domain. A basic motif region spans residues 65–87 (KALRRKLKNRVAAQTARDRKKAR). Residues 69-85 (RKLKNRVAAQTARDRKK) form a nuclear localization signal (NLS) region. The interval 91 to 126 (LEQQVVDLEEENHKLQLENQLLREKTHGLVVENQEL) is leucine-zipper. Residues 181–198 (IFPWTLTLLPLQILSLIS) form a helical; Signal-anchor for type II membrane protein membrane-spanning segment. Residues 199-267 (FWAFWTSWTL…FVLTMYTPSL (69 aa)) lie on the Lumenal side of the membrane. The interval 230–256 (QKDLVPYQPPFLCQWGPHQPSWKPLMN) is necessary for the translational pausing of its own mRNA.

This sequence belongs to the bZIP family. Isoform 1 interacts with HM13. Isoform 1 interacts with RNF139; the interaction induces ubiquitination and degradation of isoform 1. Isoform 1 interacts (via luminal domain) with DERL1; the interaction obviates the need for ectodomain shedding prior HM13/SPP-mediated XBP1 isoform 1 cleavage. Isoform 1 interacts with isoform 2; the interaction sequesters isoform 2 from the nucleus and enhances isoform 2 degradation in the cytoplasm. Isoform 1 interacts with HDAC3 and AKT1; the interactions occur in endothelial cell (EC) under disturbed flow. Isoform 1 interacts with the oncoprotein FOS. Isoform 2 interacts with ATF6; the interaction occurs in a ER stress-dependent manner and is required for DNA binding to the unfolded protein response element (UPRE). Isoform 2 interacts with PIK3R1; the interaction is direct and induces translocation of XBP1 isoform 2 into the nucleus and the unfolded protein response (UPR) XBP1-dependent target genes activation in a ER stress- and/or insulin-dependent but PI3K-independent manner. Isoform 2 interacts with SIRT1. Isoform 2 interacts with PIK3R1 and PIK3R2; the interactions are direct and induce translocation of XBP1 isoform 2 into the nucleus and the unfolded protein response (UPR) XBP1-dependent target genes activation in a ER stress- and/or insulin-dependent but PI3K-independent manner. Isoform 2 interacts with FOXO1; the interaction is direct and leads to FOXO1 ubiquitination and degradation via the proteasome pathway in hepatocytes. Acetylated by EP300; acetylation positively regulates the transcriptional activity of XBP1 isoform 2. Isoform 2 is deacetylated by SIRT1; deacetylation negatively regulates the transcriptional activity of XBP1 isoform 2. Post-translationally, ubiquitinated, leading to proteasomal degradation in response to ER stress. In terms of processing, X-box-binding protein 1, cytoplasmic form and luminal form are produced by intramembrane proteolytic cleavage of ER membrane-anchored isoform 1 triggered by HM13/SPP in a DERL1-RNF139-dependent and VCP/p97-independent manner. X-box-binding protein 1, luminal form is ubiquitinated leading to proteasomal degradation. Isoform 1 and isoform 2 are expressed at higher level in branch curves of vessel walls and in atherosclerotic plaques relative to healthy segments of the same aortas (at protein level). Expressed in skeletal muscles, plasma cells and pancreatic beta cells. Isoform 1 and isoform 2 are expressed in gonadal adipose tissue. Isoform 1 is expressed in inguinal adipose tissue.

The protein resides in the endoplasmic reticulum. It localises to the nucleus. It is found in the cytoplasm. Its subcellular location is the endoplasmic reticulum membrane. The protein localises to the membrane. Its function is as follows. Functions as a transcription factor during endoplasmic reticulum stress by regulating the unfolded protein response (UPR). Required for cardiac myogenesis and hepatogenesis during embryonic development and the development of secretory tissues such as exocrine pancreas and salivary gland. Involved in differentiation of B lymphocytes to plasma cells and production of immunoglobulins. Modulates the cellular response to ER stress in a PIK3R-dependent manner. Binds to the cis-acting X box present in the promoter regions of major histocompatibility complex class II genes. Involved in VEGF-induced endothelial cell (EC) proliferation and retinal blood vessel formation during embryonic development but also for angiogenesis in adult tissues under ischemic conditions. Also functions as a major regulator of the UPR in obesity-induced insulin resistance and type 2 diabetes for the management of obesity and diabetes prevention. In terms of biological role, plays a role in the unconventional cytoplasmic splicing processing of its own mRNA triggered by the endoplasmic reticulum (ER) transmembrane endoribonuclease ERN1: upon ER stress, the emerging XBP1 polypeptide chain, as part of a mRNA-ribosome-nascent chain (R-RNC) complex, cotranslationally recruits its own unprocessed mRNA through transient docking to the ER membrane and translational pausing, therefore facilitating efficient IRE1-mediated XBP1 mRNA isoform 2 production. In endothelial cells (EC), associated with KDR, promotes IRE1-mediated XBP1 mRNA isoform 2 production in a vascular endothelial growth factor (VEGF)-dependent manner, leading to EC proliferation and angiogenesis. Functions as a negative feed-back regulator of the potent transcription factor XBP1 isoform 2 protein levels through proteasome-mediated degradation, thus preventing the constitutive activation of the ER stress response signaling pathway. Inhibits the transactivation activity of XBP1 isoform 2 in myeloma cells. Acts as a weak transcriptional factor. Together with HDAC3, contributes to the activation of NFE2L2-mediated HMOX1 transcription factor gene expression in a PI(3)K/mTORC2/Akt-dependent signaling pathway leading to EC survival under disturbed flow/oxidative stress. Binds to the ER stress response element (ERSE) upon ER stress. Binds to the consensus 5'-GATGACGTG[TG]N(3)[AT]T-3' sequence related to cAMP responsive element (CRE)-like sequences. Binds the Tax-responsive element (TRE) present in the long terminal repeat (LTR) of T-cell leukemia virus type 1 (HTLV-I) and to the TPA response elements (TRE). Associates preferentially to the HDAC3 gene promoter region in a static flow-dependent manner. Binds to the CDH5/VE-cadherin gene promoter region. Functions as a stress-inducible potent transcriptional activator during endoplasmic reticulum (ER) stress by inducing unfolded protein response (UPR) target genes via binding to the UPR element (UPRE). Up-regulates target genes encoding ER chaperones and ER-associated degradation (ERAD) components to enhance the capacity of productive folding and degradation mechanism, respectively, in order to maintain the homeostasis of the ER under ER stress. Plays a role in the production of immunoglobulins and interleukin-6 in the presence of stimuli required for plasma cell differentiation, and promotes as well membrane phospholipid biosynthesis necessary for ER expansion. Contributes to the VEGF-induced endothelial cell (EC) growth and proliferation in a Akt/GSK-dependent and/or -independent signaling pathway, respectively, leading to beta-catenin nuclear translocation and E2F2 gene expression. Promotes umbilical vein EC apoptosis and atherosclerotisis development in a caspase-dependent signaling pathway, and contributes to VEGF-induced EC proliferation and angiogenesis in adult tissues under ischemic conditions. Involved in the regulation of endostatin-induced autophagy in EC through BECN1 transcriptional activation. Plays a role as an oncogene by promoting tumor progression: stimulates zinc finger protein SNAI1 transcription to induce epithelial-to-mesenchymal (EMT) transition, cell migration and invasion of breast cancer cells. Involved in adipocyte differentiation by regulating lipogenic gene expression during lactation. Plays a role in the survival of both dopaminergic neurons of the substantia nigra pars compacta (SNpc), by maintaining protein homeostasis and of myeloma cells. Increases insulin sensitivity in the liver as a response to a high carbohydrate diet, resulting in improved glucose tolerance. Also improves glucose homeostasis in an ER stress- and/or insulin-independent manner through both binding and proteasome-induced degradation of the transcription factor FOXO1, hence resulting in suppression of gluconeogenic genes expression and in a reduction of blood glucose levels. Controls the induction of de novo fatty acid synthesis in hepatocytes by regulating the expression of a subset of lipogenic genes in an ER stress- and UPR-independent manner. Binds to the 5'-CCACG-3' motif in the PPARG promoter. Associates preferentially to the HDAC3 gene promoter region in a disturbed flow-dependent manner. Binds to the BECN1 gene promoter region. Binds to the CDH5/VE-cadherin gene promoter region. Binds to the ER stress response element (ERSE) upon ER stress. The protein is X-box-binding protein 1 of Mus musculus (Mouse).